The following is a 612-amino-acid chain: E3 ubiquitin-protein ligase synoviolin (612 aa).

Over 1-4 (MFRT) the chain is Cytoplasmic. The tract at residues 1-251 (MFRTAVMMAA…LFAIRPMYLA (251 aa)) is involved in FAM8A1 interaction. The helical transmembrane segment at 5–25 (AVMMAASLALTGAVVAHAYYL) threads the bilayer. Residues 21–42 (HAYYLKHQFYPTVVYLTKSSPS) are interaction with SEL1L. Over 26 to 41 (KHQFYPTVVYLTKSSP) the chain is Lumenal. Residues 42–62 (SMAVLYIQAFVLVFLLGKVMG) form a helical membrane-spanning segment. Residues 63–98 (KVFFGQLRAAEMEHLLERSWYAVTETCLAFTVFRDD) are Cytoplasmic-facing. A helical transmembrane segment spans residues 99-119 (FSPRFVALFTLLLFLKCFHWL). At 120 to 140 (AEDRVDFMERSPNISWLFHCR) the chain is on the lumenal side. The chain crosses the membrane as a helical span at residues 141 to 161 (IVSLMFLLGILDFLFVSHAYH). Topologically, residues 162-169 (SILTRGAS) are cytoplasmic. The helical transmembrane segment at 170-190 (VQLVFGFEYAILMTMVLTIFI) threads the bilayer. Residues 191–224 (KYVLHSVDLQSENPWDNKAVYMLYTELFTGFIKV) are Lumenal-facing. Residues 225-245 (LLYMAFMTIMIKVHTFPLFAI) traverse the membrane as a helical segment. Residues 236–270 (KVHTFPLFAIRPMYLAMRQFKKAVTDAIMSRRAIR) are interaction with p53/TP53. Topologically, residues 246–612 (RPMYLAMRQF…LQKLESPVAH (367 aa)) are cytoplasmic. 8 residues coordinate Zn(2+): Cys-291, Cys-294, Cys-307, His-309, His-312, Cys-315, Cys-326, and Cys-329. The RING-type; atypical zinc-finger motif lies at 291–330 (CIICREEMVTGAKRLPCNHIFHTSCLRSWFQRQQTCPTCR). Disordered stretches follow at residues 337 to 375 (SLPA…GLLP) and 393 to 449 (PVPP…PGFP). Composition is skewed to pro residues over residues 341 to 375 (QSPP…GLLP) and 393 to 409 (PVPP…PPPT). Low complexity predominate over residues 416–434 (PSGAATTTAAGTSTSAPAP). Residues 435–449 (GSVPGPEAGPAPGFP) are compositionally biased toward pro residues. The segment at 474–529 (GFAGLTPEELRALEGHERQHLEARLQSLRNIHTLLDAAMLQINQYLTVLASLGPPR) is HAF-H domain; necessary to form higher-order Hrd1 complexes. The disordered stretch occupies residues 530–612 (PATSVNPTEE…LQKLESPVAH (83 aa)). Over residues 539 to 559 (ETASTVVSAAPSTSAPSSEAP) the composition is skewed to low complexity. Positions 560–570 (TPSPGASPPIP) are enriched in pro residues. The span at 586–595 (ELPEDGEPDA) shows a compositional bias: acidic residues. Phosphoserine is present on Ser-608.

The protein belongs to the HRD1 family. As to quaternary structure, homodimer. Interacts with p53/TP53. Interacts with HTT. Component of the HRD1 complex, which comprises at least SYNV1/HRD1, DERL1/2, FAM8A1, HERPUD1/HERP, OS9, SEL1L and UBE2J1. FAM8A1 is stabilized by interaction with SYNV1, which prevents its proteasomal degradation. OS9 and UBE2J1 recruitment to the complex may be mediated by SEL1L. SYNV1 assembles with SEL1L and FAM8A1 through its transmembrane domains, but interaction with its cytoplasmic domain is required to confer stability to FAM8A1 and enhance recruitment of HERPUD1. The HRD1 complex also associates with VIMP and may transfer misfolded proteins from the endoplasmic reticulum to VCP. May form a complex with ERLEC1; HSPA5; OS9 and SEL1L. Interacts with VCP. Interacts with UBXN6. Interacts with BAG6. Interacts with NFE2L1. Interacts (via N-terminus) with components of the pre-B cell receptor, including IGLL1 and VPREB1A. Interacts with CREB3L3; this interaction leads to CREB3L3 ubiquitination and proteasomal degradation. Post-translationally, auto-ubiquitinated. Deubiquitinated by USP19. Widely expressed, with highest levels in bone, spleen, lung and testis. In the brain, present in neurons but not in glial cells. Up-regulated in synovial tissues from mice with collagen-induced arthritis (at protein level). Expressed in the liver.

The protein resides in the endoplasmic reticulum membrane. It catalyses the reaction S-ubiquitinyl-[E2 ubiquitin-conjugating enzyme]-L-cysteine + [acceptor protein]-L-lysine = [E2 ubiquitin-conjugating enzyme]-L-cysteine + N(6)-ubiquitinyl-[acceptor protein]-L-lysine.. It participates in protein modification; protein ubiquitination. E3 ubiquitin-protein ligase which accepts ubiquitin specifically from endoplasmic reticulum-associated UBC7 E2 ligase and transfers it to substrates, promoting their degradation. Component of the endoplasmic reticulum quality control (ERQC) system also called ER-associated degradation (ERAD) involved in ubiquitin-dependent degradation of misfolded endoplasmic reticulum proteins. Also promotes the degradation of normal but naturally short-lived proteins such as SGK. Protects cells from ER stress-induced apoptosis. Sequesters p53/TP53 in the cytoplasm and promotes its degradation, thereby negatively regulating its biological function in transcription, cell cycle regulation and apoptosis. Required for embryogenesis. Mediates the ubiquitination and subsequent degradation of cytoplasmic NFE2L1. During the early stage of B cell development, required for degradation of the pre-B cell receptor (pre-BCR) complex, hence supporting further differentiation into mature B cells. The sequence is that of E3 ubiquitin-protein ligase synoviolin (Syvn1) from Mus musculus (Mouse).